The following is a 421-amino-acid chain: Histidine--tRNA ligase (421 aa).

It belongs to the class-II aminoacyl-tRNA synthetase family. Homodimer.

The protein resides in the cytoplasm. It carries out the reaction tRNA(His) + L-histidine + ATP = L-histidyl-tRNA(His) + AMP + diphosphate + H(+). The protein is Histidine--tRNA ligase of Thermus thermophilus (strain ATCC BAA-163 / DSM 7039 / HB27).